Consider the following 967-residue polypeptide: Isoleucine--tRNA ligase (967 aa).

The 'HIGH' region motif lies at 68-78 (PYANGTLHMGH). Glu583 provides a ligand contact to L-isoleucyl-5'-AMP. The 'KMSKS' region signature appears at 624-628 (KMSKS). Lys627 is an ATP binding site. Zn(2+) is bound by residues Cys937, Cys940, Cys957, and Cys960.

It belongs to the class-I aminoacyl-tRNA synthetase family. IleS type 1 subfamily. Monomer. It depends on Zn(2+) as a cofactor.

The protein resides in the cytoplasm. The enzyme catalyses tRNA(Ile) + L-isoleucine + ATP = L-isoleucyl-tRNA(Ile) + AMP + diphosphate. In terms of biological role, catalyzes the attachment of isoleucine to tRNA(Ile). As IleRS can inadvertently accommodate and process structurally similar amino acids such as valine, to avoid such errors it has two additional distinct tRNA(Ile)-dependent editing activities. One activity is designated as 'pretransfer' editing and involves the hydrolysis of activated Val-AMP. The other activity is designated 'posttransfer' editing and involves deacylation of mischarged Val-tRNA(Ile). In Prochlorococcus marinus (strain NATL1A), this protein is Isoleucine--tRNA ligase.